The sequence spans 841 residues: Potassium transport protein 1 (841 aa).

The next 2 helical transmembrane spans lie at 24-44 (YIYI…GGTT) and 80-100 (ILYG…ISFI). Residues asparagine 116 and asparagine 164 are each glycosylated (N-linked (GlcNAc...) asparagine). The interval 173 to 192 (STNNPYFPDNPPSPKADISK) is disordered. Residues asparagine 215 and asparagine 401 are each glycosylated (N-linked (GlcNAc...) asparagine). A run of 7 helical transmembrane segments spans residues 469–489 (MVTL…IVFA), 507–527 (GWWA…SLIP), 537–557 (IFLL…FPCF), 600–620 (WVLF…FMVL), 662–682 (AVLV…AINM), 715–735 (LSYD…CEGG), and 747–767 (IFTV…STGL). The N-linked (GlcNAc...) asparagine glycan is linked to asparagine 771.

It belongs to the TrkH potassium transport family.

The protein localises to the cell membrane. Functionally, together with TRK2, defines the major, high-affinity potassium influx transport system. Involved in maintenance of the proper sodium/potassium ratio in the cell and in regulating the plasma membrane potential. The polypeptide is Potassium transport protein 1 (trk1) (Schizosaccharomyces pombe (strain 972 / ATCC 24843) (Fission yeast)).